We begin with the raw amino-acid sequence, 931 residues long: Bifunctional uridylyltransferase/uridylyl-removing enzyme (931 aa).

A uridylyltransferase region spans residues 1 to 383 (MDSVTPNSRP…KTGNSWRRVP (383 aa)). The tract at residues 384–739 (ESDDFIVDNN…VGFDPARGVT (356 aa)) is uridylyl-removing. In terms of domain architecture, HD spans 499–622 (VDEHLIRCIG…VQSVEQMKLL (124 aa)). 2 consecutive ACT domains span residues 740-822 (ELTI…AVAR) and 851-931 (VIEV…QPAA).

It belongs to the GlnD family. The cofactor is Mg(2+).

The catalysed reaction is [protein-PII]-L-tyrosine + UTP = [protein-PII]-uridylyl-L-tyrosine + diphosphate. It catalyses the reaction [protein-PII]-uridylyl-L-tyrosine + H2O = [protein-PII]-L-tyrosine + UMP + H(+). Uridylyltransferase (UTase) activity is inhibited by glutamine, while glutamine activates uridylyl-removing (UR) activity. Its function is as follows. Modifies, by uridylylation and deuridylylation, the PII regulatory proteins (GlnB and homologs), in response to the nitrogen status of the cell that GlnD senses through the glutamine level. Under low glutamine levels, catalyzes the conversion of the PII proteins and UTP to PII-UMP and PPi, while under higher glutamine levels, GlnD hydrolyzes PII-UMP to PII and UMP (deuridylylation). Thus, controls uridylylation state and activity of the PII proteins, and plays an important role in the regulation of nitrogen fixation and metabolism. In Bradyrhizobium sp. (strain BTAi1 / ATCC BAA-1182), this protein is Bifunctional uridylyltransferase/uridylyl-removing enzyme.